Here is a 475-residue protein sequence, read N- to C-terminus: Ribulose bisphosphate carboxylase large chain (475 aa).

A propeptide spanning residues 1–2 (MS) is cleaved from the precursor. An N-acetylproline modification is found at Pro3. Position 14 is an N6,N6,N6-trimethyllysine (Lys14). Substrate is bound by residues Asn123 and Thr173. Lys175 acts as the Proton acceptor in catalysis. Lys177 serves as a coordination point for substrate. Mg(2+) contacts are provided by Lys201, Asp203, and Glu204. Lys201 is modified (N6-carboxylysine). Catalysis depends on His294, which acts as the Proton acceptor. Residues Arg295, His327, and Ser379 each coordinate substrate.

It belongs to the RuBisCO large chain family. Type I subfamily. In terms of assembly, heterohexadecamer of 8 large chains and 8 small chains; disulfide-linked. The disulfide link is formed within the large subunit homodimers. Mg(2+) serves as cofactor. In terms of processing, the disulfide bond which can form in the large chain dimeric partners within the hexadecamer appears to be associated with oxidative stress and protein turnover.

It is found in the plastid. The protein resides in the chloroplast. It catalyses the reaction 2 (2R)-3-phosphoglycerate + 2 H(+) = D-ribulose 1,5-bisphosphate + CO2 + H2O. The catalysed reaction is D-ribulose 1,5-bisphosphate + O2 = 2-phosphoglycolate + (2R)-3-phosphoglycerate + 2 H(+). Its function is as follows. RuBisCO catalyzes two reactions: the carboxylation of D-ribulose 1,5-bisphosphate, the primary event in carbon dioxide fixation, as well as the oxidative fragmentation of the pentose substrate in the photorespiration process. Both reactions occur simultaneously and in competition at the same active site. The polypeptide is Ribulose bisphosphate carboxylase large chain (Populus trichocarpa (Western balsam poplar)).